We begin with the raw amino-acid sequence, 390 residues long: Neutrophil cytosol factor 1 (390 aa).

The PX domain maps to Thr4 to Leu125. 2 consecutive SH3 domains span residues Ile156–Ser215 and Tyr226–Glu285. The interval Gln291–Val390 is disordered. Phosphoserine occurs at positions 304, 321, 329, and 346. Residues Ile374 to Lys383 are compositionally biased toward basic and acidic residues.

As to quaternary structure, component of the phagocyte NADPH oxidase complex composed of an obligatory core heterodimer formed by the membrane proteins CYBA and CYBB and the cytosolic regulatory subunits NCF1/p47-phox, NCF2/p67-phox, NCF4/p40-phox and the small GTPase RAC1 or RAC2. Part of a cytosolic complex composed at least by NCF1, NCF2 and NCF4. Interacts (via C-terminus) with NCF2 (via the C-terminal SH3 domain). Interacts with NCF4. Interacts with CYBB. Interacts (via the second SH3 domain) with CYBA; interaction is phosphorylation-dependent. Interacts with NOXA1. Interacts with ADAM15. Interacts with TRAF4. Interacts with FASLG. Interacts with PARK7 (via C-terminus); the interaction is enhanced by LPS and modulates NCF1 phosphorylation and membrane translocation. Phosphorylated by PRKCD; phosphorylation induces activation of NCF1, leading to assembly and activation of the NADPH oxidase complex.

The protein localises to the cytoplasm. Its subcellular location is the cytosol. It localises to the membrane. Functionally, subunit of the phagocyte NADPH oxidase complex that mediates the transfer of electrons from cytosolic NADPH to O2 to produce the superoxide anion (O2(-)). In the activated complex, electrons are first transferred from NADPH to flavin adenine dinucleotide (FAD) and subsequently transferred via two heme molecules to molecular oxygen, producing superoxide through an outer-sphere reaction. Activation of the NADPH oxidase complex is initiated by the assembly of cytosolic subunits of the NADPH oxidase complex with the core NADPH oxidase complex to form a complex at the plasma membrane or phagosomal membrane. This activation process is initiated by phosphorylation dependent binding of the cytosolic NCF1/p47-phox subunit to the C-terminus of CYBA/p22-phox. The sequence is that of Neutrophil cytosol factor 1 from Mus musculus (Mouse).